Here is a 367-residue protein sequence, read N- to C-terminus: Cytochrome b (367 aa).

Transmembrane regions (helical) follow at residues 25–45, 69–90, 105–125, and 170–190; these read FGSM…FLAI, WIMQ…YIHI, WLSG…GYVL, and FFAL…IHII. Positions 75 and 89 each coordinate heme b. Residues His174 and His188 each coordinate heme b. His193 serves as a coordination point for a ubiquinone. Transmembrane regions (helical) follow at residues 218-238, 280-300, 312-332, and 339-358; these read YKDV…MSFT, LGGT…PFTH, LTQA…WTAT, and FIFI…IINP.

Belongs to the cytochrome b family. In terms of assembly, the cytochrome bc1 complex contains 3 respiratory subunits (MT-CYB, CYC1 and UQCRFS1), 2 core proteins (UQCRC1 and UQCRC2) and probably 6 low-molecular weight proteins. Heme b serves as cofactor.

It localises to the mitochondrion inner membrane. Functionally, component of the ubiquinol-cytochrome c reductase complex (complex III or cytochrome b-c1 complex) that is part of the mitochondrial respiratory chain. The b-c1 complex mediates electron transfer from ubiquinol to cytochrome c. Contributes to the generation of a proton gradient across the mitochondrial membrane that is then used for ATP synthesis. This chain is Cytochrome b (MT-CYB), found in Austrelaps superbus (Lowland copperhead snake).